Here is a 164-residue protein sequence, read N- to C-terminus: Phosphopantetheine adenylyltransferase (164 aa).

Serine 10 is a binding site for substrate. Residues 10 to 11 (SF) and histidine 18 contribute to the ATP site. Substrate is bound by residues lysine 42, methionine 74, and arginine 88. Residues 89–91 (GLR), glutamate 99, and 124–130 (YFFVSAR) each bind ATP.

Belongs to the bacterial CoaD family. Homohexamer. Requires Mg(2+) as cofactor.

It localises to the cytoplasm. It catalyses the reaction (R)-4'-phosphopantetheine + ATP + H(+) = 3'-dephospho-CoA + diphosphate. It functions in the pathway cofactor biosynthesis; coenzyme A biosynthesis; CoA from (R)-pantothenate: step 4/5. In terms of biological role, reversibly transfers an adenylyl group from ATP to 4'-phosphopantetheine, yielding dephospho-CoA (dPCoA) and pyrophosphate. The protein is Phosphopantetheine adenylyltransferase of Anaeromyxobacter dehalogenans (strain 2CP-C).